We begin with the raw amino-acid sequence, 420 residues long: Serine hydroxymethyltransferase (420 aa).

Residues Leu-123 and 127–129 (GHL) each bind (6S)-5,6,7,8-tetrahydrofolate. An N6-(pyridoxal phosphate)lysine modification is found at Lys-232.

This sequence belongs to the SHMT family. Homodimer. It depends on pyridoxal 5'-phosphate as a cofactor.

The protein resides in the cytoplasm. The enzyme catalyses (6R)-5,10-methylene-5,6,7,8-tetrahydrofolate + glycine + H2O = (6S)-5,6,7,8-tetrahydrofolate + L-serine. Its pathway is one-carbon metabolism; tetrahydrofolate interconversion. It participates in amino-acid biosynthesis; glycine biosynthesis; glycine from L-serine: step 1/1. Its function is as follows. Catalyzes the reversible interconversion of serine and glycine with tetrahydrofolate (THF) serving as the one-carbon carrier. This reaction serves as the major source of one-carbon groups required for the biosynthesis of purines, thymidylate, methionine, and other important biomolecules. Also exhibits THF-independent aldolase activity toward beta-hydroxyamino acids, producing glycine and aldehydes, via a retro-aldol mechanism. The sequence is that of Serine hydroxymethyltransferase from Ehrlichia chaffeensis (strain ATCC CRL-10679 / Arkansas).